Here is a 177-residue protein sequence, read N- to C-terminus: Peptide methionine sulfoxide reductase MsrA 2 (177 aa).

Residue C12 is part of the active site.

The protein belongs to the MsrA Met sulfoxide reductase family.

The catalysed reaction is L-methionyl-[protein] + [thioredoxin]-disulfide + H2O = L-methionyl-(S)-S-oxide-[protein] + [thioredoxin]-dithiol. The enzyme catalyses [thioredoxin]-disulfide + L-methionine + H2O = L-methionine (S)-S-oxide + [thioredoxin]-dithiol. Functionally, has an important function as a repair enzyme for proteins that have been inactivated by oxidation. Catalyzes the reversible oxidation-reduction of methionine sulfoxide in proteins to methionine. The chain is Peptide methionine sulfoxide reductase MsrA 2 from Staphylococcus aureus (strain MRSA252).